The chain runs to 354 residues: G-protein coupled receptor homolog US28 (354 aa).

The Extracellular portion of the chain corresponds to 1-37 (MTPTTTTAELTTEFDYDEDATPCVFTDVLNQSKPVTL). The N-linked (GlcNAc...) asparagine; by host glycan is linked to Asn30. A helical transmembrane segment spans residues 38-58 (FLYGVVFLFGSIGNFLVIFTI). Residues 59–69 (TWRRRIQCSGD) lie on the Cytoplasmic side of the membrane. The helical transmembrane segment at 70 to 90 (VYFINLAAADLLFVCTLPLWM) threads the bilayer. Topologically, residues 91 to 101 (QYLLDHNSLAS) are extracellular. Residues 102–122 (VPCTLLTACFYVAMFASLCFI) form a helical membrane-spanning segment. Topologically, residues 123 to 145 (TEIALDRYYAIVYMRYRPVKQAC) are cytoplasmic. The helical transmembrane segment at 146-166 (LFSIFWWIFAVIIAIPHFMVV) threads the bilayer. Topologically, residues 167 to 183 (TKKDNQCMTDYDYLEVS) are extracellular. The chain crosses the membrane as a helical span at residues 184-204 (YPIILNVELMLGAFVIPLSVI). Residues 205–228 (SYCYYRISRIVAVSQSRHKGRIVR) lie on the Cytoplasmic side of the membrane. The chain crosses the membrane as a helical span at residues 229 to 249 (VLIAVVLVFIIFWLPYHLTLF). Residues 250-273 (VDTLKLLKWISSSCEFERSLKRAL) lie on the Extracellular side of the membrane. The helical transmembrane segment at 274-294 (ILTESLAFCHCCLNPLLYVFV) threads the bilayer. Over 295–354 (GTKFRQELHCLLAEFRQRLFSRDVSWYHSMSFSRRSSPSRRETSSDTLSDEVCRVSQIIP) the chain is Cytoplasmic.

The protein belongs to the G-protein coupled receptor 1 family. Interacts with host GPRASP1; this interaction targets US28 to lysosomes for degradation. Interacts with host CX3CL1/Fractalkine (via N-terminus). Interacts with host Gi alpha-1 subunit GNAI1; this interaction does not lead to the catalytic activation of Gi complex. In terms of processing, phosphorylated. High phosphorylation occurs concomitantly with receptor endocytosis and correlate with low receptor presence at the plasma membrane.

Its subcellular location is the host cell membrane. Binds to a great number of different CC-chemokines including CCL5/RANTES, CCL2/MCP-1, CCL3/MIP-1-alpha as well as CX3CL1/Fractalkine. Transduces signals resulting in the activation of MAP kinase signaling pathways and augmentation of intracellular calcium ion levels, leading to alterations in chemotactic behavior of vascular smooth muscle cells and macrophages. The US28 receptor also exhibits high levels of agonist-independent signaling activity and agonist-independent endocytosis. Interacts with the host Gi complex without activating it, thereby probably interfering with the chemokine-Gi signaling. May also function as a G protein sink to sequester G protein from the cell surface via internalization. Interacts with endogenous Gaq/11 subunits and thereby constitutively activates phospholipase C. The sequence is that of G-protein coupled receptor homolog US28 (US28) from Homo sapiens (Human).